The following is a 103-amino-acid chain: Small ribosomal subunit protein uS10 (103 aa).

Belongs to the universal ribosomal protein uS10 family. As to quaternary structure, part of the 30S ribosomal subunit.

Involved in the binding of tRNA to the ribosomes. In Baumannia cicadellinicola subsp. Homalodisca coagulata, this protein is Small ribosomal subunit protein uS10.